Consider the following 122-residue polypeptide: Large ribosomal subunit protein uL14 (122 aa).

Belongs to the universal ribosomal protein uL14 family. As to quaternary structure, part of the 50S ribosomal subunit. Forms a cluster with proteins L3 and L19. In the 70S ribosome, L14 and L19 interact and together make contacts with the 16S rRNA in bridges B5 and B8.

Its function is as follows. Binds to 23S rRNA. Forms part of two intersubunit bridges in the 70S ribosome. This chain is Large ribosomal subunit protein uL14, found in Lactobacillus gasseri (strain ATCC 33323 / DSM 20243 / BCRC 14619 / CIP 102991 / JCM 1131 / KCTC 3163 / NCIMB 11718 / NCTC 13722 / AM63).